The primary structure comprises 41 residues: Fibrinogen beta chain (41 aa).

A disordered region spans residues 1-41 (ADDYDDEVLPDARGHRPIDRKREELPSLRPAPPPISGGGYR). Tyrosine 4 carries the sulfotyrosine modification. Basic and acidic residues predominate over residues 10 to 26 (PDARGHRPIDRKREELP). The segment at 14–16 (GHR) is beta-chain polymerization, binding distal domain of another fibrin.

As to quaternary structure, heterohexamer; disulfide linked. Contains 2 sets of 3 non-identical chains (alpha, beta and gamma). The 2 heterotrimers are in head to head conformation with the N-termini in a small central domain. In terms of processing, conversion of fibrinogen to fibrin is triggered by thrombin, which cleaves fibrinopeptides A and B from alpha and beta chains, and thus exposes the N-terminal polymerization sites responsible for the formation of the soft clot.

The protein resides in the secreted. Its function is as follows. Cleaved by the protease thrombin to yield monomers which, together with fibrinogen alpha (FGA) and fibrinogen gamma (FGG), polymerize to form an insoluble fibrin matrix. Fibrin has a major function in hemostasis as one of the primary components of blood clots. In addition, functions during the early stages of wound repair to stabilize the lesion and guide cell migration during re-epithelialization. Was originally thought to be essential for platelet aggregation, based on in vitro studies using anticoagulated blood. However subsequent studies have shown that it is not absolutely required for thrombus formation in vivo. Enhances expression of SELP in activated platelets. Maternal fibrinogen is essential for successful pregnancy. Fibrin deposition is also associated with infection, where it protects against IFNG-mediated hemorrhage. May also facilitate the antibacterial immune response via both innate and T-cell mediated pathways. The chain is Fibrinogen beta chain (FGB) from Oryctolagus cuniculus (Rabbit).